The primary structure comprises 211 residues: Protein N-terminal glutamine amidohydrolase (211 aa).

Active-site residues include cysteine 24, histidine 78, and aspartate 94.

Belongs to the NTAQ1 family. Monomer.

It catalyses the reaction N-terminal L-glutaminyl-[protein] + H2O = N-terminal L-glutamyl-[protein] + NH4(+). In terms of biological role, mediates the side-chain deamidation of N-terminal glutamine residues to glutamate, an important step in N-end rule pathway of protein degradation. Conversion of the resulting N-terminal glutamine to glutamate renders the protein susceptible to arginylation, polyubiquitination and degradation as specified by the N-end rule. Does not act on substrates with internal or C-terminal glutamine and does not act on non-glutamine residues in any position. This Anopheles gambiae (African malaria mosquito) protein is Protein N-terminal glutamine amidohydrolase (tun).